Consider the following 192-residue polypeptide: Probable nicotinate-nucleotide adenylyltransferase (192 aa).

This sequence belongs to the NadD family.

The catalysed reaction is nicotinate beta-D-ribonucleotide + ATP + H(+) = deamido-NAD(+) + diphosphate. Its pathway is cofactor biosynthesis; NAD(+) biosynthesis; deamido-NAD(+) from nicotinate D-ribonucleotide: step 1/1. In terms of biological role, catalyzes the reversible adenylation of nicotinate mononucleotide (NaMN) to nicotinic acid adenine dinucleotide (NaAD). This chain is Probable nicotinate-nucleotide adenylyltransferase, found in Rhizobium etli (strain ATCC 51251 / DSM 11541 / JCM 21823 / NBRC 15573 / CFN 42).